A 271-amino-acid polypeptide reads, in one-letter code: (+)-cis,trans-nepetalactol synthase NEPS1 (271 aa).

NAD(+) contacts are provided by residues 24 to 30, 49 to 51, 72 to 73, and asparagine 99; these read GGASGIG, DIQ, and DV. Residues threonine 154 and tyrosine 167 each coordinate substrate. NAD(+) contacts are provided by residues tyrosine 167, lysine 171, and 200 to 205; that span reads VLTPLA. Tyrosine 167 (proton acceptor) is an active-site residue.

This sequence belongs to the short-chain dehydrogenases/reductases (SDR) family.

The catalysed reaction is (S)-8-oxocitronellyl enol = cis-trans-nepetalactol. It catalyses the reaction cis-cis-nepetalactol + NAD(+) = cis-cis-nepetalactone + NADH + H(+). It carries out the reaction cis-trans-nepetalactol + NAD(+) = cis-trans-nepetalactone + NADH + H(+). Its function is as follows. Bifunctional enzyme that possesses cyclase and dehydrogenase activities. Functions as a non-oxidoreductive cyclase to promote the formation of cis-trans-nepetalactol. Functions as dehydrogenase to oxidize cis-cis-nepetalactol and cis-trans-nepetalactol into nepetalactones, metabolites that are both insect-repellent and have euphoric effect in cats. Binds NAD(+) as classical short-chain dehydrogenase/reductase (SDR), but does not utilize it for its redox-neutral cyclase activity. The sequence is that of (+)-cis,trans-nepetalactol synthase NEPS1 from Nepeta racemosa (Catmint).